We begin with the raw amino-acid sequence, 155 residues long: Myelin basic protein (155 aa).

Residues 1–72 (MASATTSDHA…HQGARRQTDD (72 aa)) are disordered. N-acetylalanine; in forms C1, C2, C3 and C8 is present on A2. Q12 is subject to Deamidated glutamine; in forms C1, C2 and C3. A compositionally biased stretch (basic and acidic residues) spans 37–49 (GSRKVPEKGKEPA). Residues S73 and S84 each carry the phosphoserine; in forms C1, C2 and C3 modification. The segment at 113-155 (RAHYGAAGSSKSKDGFRGRRDGSGTLSSFFKMGKKGEGSPARR) is disordered. Phosphoserine; in forms C1 and C3 occurs at positions 121 and 122. Basic and acidic residues predominate over residues 123–134 (KSKDGFRGRRDG). 3 positions are modified to phosphoserine; in forms C1, C2 and C3: S135, S139, and S140.

This sequence belongs to the myelin basic protein family. Several charge isomers are produced as a result of optional post-translational modifications, such as phosphorylation, deamidation and citrullination. Dogfish MBP contains four major components designated as C1, C2, C3 and C8. C1 and C3, but not C2 are phosphorylated at either Ser-121 or Ser-122; C2 is phosphorylated at 2 or 3 sites among Ser-135, Ser-139 and Ser-140. Hydroxyproline and citrulline are present but were not identified in either C1, C2 or C3, which suggests their presence in C8.

Its subcellular location is the myelin membrane. In terms of biological role, this protein may function to maintain proper structure of myelin. This is Myelin basic protein (MBP) from Squalus acanthias (Spiny dogfish).